The following is a 357-amino-acid chain: MEERMNVLHDFGIQSTRYLQVNYEDSQDWFVLVSVIADLRNAFYVLFPIWFHIQETVGINLLWVAVVGDWFNLVFKWILFGQRPYWWVLDTDYYSNSSVPLIKQFPVTCETGPGSPSGHAMGTAGVYYVMVTSTLAIFRGKKKSTYGFRCLNVVLWLGYWAVQLNVCLSRIYLAAHFPHQVVAGVLSGIAVAETFSHIRGIYNASLQRYCLITFFLFGFALGFYLLLKGLGVDLLWTLEKAKRWCERPEWVHLDTTPFASLFKNLGTLLGLGLALNSSMYRKSCKGELRKSLPFRLACIVASLGLLHLFDSLKPPSQIESIFYILSFCKSATVPFASVSLIPYCLARLLGQTHKKSL.

The Lumenal segment spans residues 1–28; the sequence is MEERMNVLHDFGIQSTRYLQVNYEDSQD. A helical membrane pass occupies residues 29-49; the sequence is WFVLVSVIADLRNAFYVLFPI. Residues 50–60 lie on the Cytoplasmic side of the membrane; that stretch reads WFHIQETVGIN. Residues 61-81 traverse the membrane as a helical segment; the sequence is LLWVAVVGDWFNLVFKWILFG. The Lumenal portion of the chain corresponds to 82–117; that stretch reads QRPYWWVLDTDYYSNSSVPLIKQFPVTCETGPGSPS. Arg83 contributes to the substrate binding site. The N-linked (GlcNAc...) asparagine glycan is linked to Asn96. Residues 118-138 form a helical membrane-spanning segment; that stretch reads GHAMGTAGVYYVMVTSTLAIF. The active-site Proton donor is His119. The Cytoplasmic segment spans residues 139 to 147; the sequence is RGKKKSTYG. A helical membrane pass occupies residues 148-168; the sequence is FRCLNVVLWLGYWAVQLNVCL. Over 169–170 the chain is Lumenal; sequence SR. Position 170 (Arg170) interacts with substrate. The chain crosses the membrane as a helical span at residues 171 to 191; it reads IYLAAHFPHQVVAGVLSGIAV. His176 (nucleophile) is an active-site residue. The Cytoplasmic segment spans residues 192–211; the sequence is AETFSHIRGIYNASLQRYCL. Residues 212-232 form a helical membrane-spanning segment; the sequence is ITFFLFGFALGFYLLLKGLGV. Residues 233–254 lie on the Lumenal side of the membrane; it reads DLLWTLEKAKRWCERPEWVHLD. The chain crosses the membrane as a helical span at residues 255 to 275; it reads TTPFASLFKNLGTLLGLGLAL. Topologically, residues 276-291 are cytoplasmic; sequence NSSMYRKSCKGELRKS. Residues 292–312 traverse the membrane as a helical segment; it reads LPFRLACIVASLGLLHLFDSL. The Lumenal portion of the chain corresponds to 313-320; it reads KPPSQIES. The chain crosses the membrane as a helical span at residues 321-341; that stretch reads IFYILSFCKSATVPFASVSLI. The Cytoplasmic segment spans residues 342–357; sequence PYCLARLLGQTHKKSL. A Prevents secretion from ER motif is present at residues 354-357; that stretch reads KKSL.

The protein belongs to the glucose-6-phosphatase family.

It is found in the endoplasmic reticulum membrane. It catalyses the reaction D-glucose 6-phosphate + H2O = D-glucose + phosphate. It functions in the pathway carbohydrate biosynthesis; gluconeogenesis. Hydrolyzes glucose-6-phosphate to glucose in the endoplasmic reticulum. Forms with the glucose-6-phosphate transporter (SLC37A4/G6PT) the complex responsible for glucose production in the terminal step of glycogenolysis and gluconeogenesis. Hence, it is the key enzyme in homeostatic regulation of blood glucose levels. In Rattus norvegicus (Rat), this protein is Glucose-6-phosphatase catalytic subunit 1 (G6pc1).